We begin with the raw amino-acid sequence, 441 residues long: POC1 centriolar protein homolog A (441 aa).

WD repeat units lie at residues 16 to 55 (GHRD…RAYR), 58 to 97 (GHKD…ESTA), 100 to 139 (AHTG…FLFS), 142 to 181 (QHIN…CIQS), 184 to 223 (EHGG…LIQH), 226 to 265 (VHSG…LLYT), and 268 to 307 (GHQG…GSYP). Residues 347–376 (DLEPHITEMSVKDRSSPLSYTSRSVDQHHP) are disordered. Basic and acidic residues predominate over residues 348-361 (LEPHITEMSVKDRS). A coiled-coil region spans residues 400-427 (LTRTVGILEQRLSLTEDKLKECIEQQQA).

It belongs to the WD repeat POC1 family. As to quaternary structure, interacts with pat.

The protein localises to the cytoplasm. It is found in the cytoskeleton. In terms of biological role, may play an important role in centriole assembly and/or stability and ciliogenesis. This is POC1 centriolar protein homolog A (poc1a) from Xenopus laevis (African clawed frog).